Consider the following 546-residue polypeptide: RuBisCO large subunit-binding protein subunit alpha, chloroplastic (546 aa).

The transit peptide at 1-6 directs the protein to the chloroplast; sequence RFSVRA. Ser-50 carries the post-translational modification Phosphoserine.

The protein belongs to the chaperonin (HSP60) family. As to quaternary structure, oligomer of probably six alpha and six beta subunits.

It is found in the plastid. The protein localises to the chloroplast. Functionally, this protein binds RuBisCO small and large subunits and is implicated in the assembly of the enzyme oligomer. The sequence is that of RuBisCO large subunit-binding protein subunit alpha, chloroplastic from Brassica napus (Rape).